The chain runs to 89 residues: Small ribosomal subunit protein uS15 (89 aa).

Residues 1 to 25 (MSLDTTEKQQLINTHQTHGTDTGSA) are disordered. Residues 8–25 (KQQLINTHQTHGTDTGSA) show a composition bias toward polar residues.

The protein belongs to the universal ribosomal protein uS15 family. As to quaternary structure, part of the 30S ribosomal subunit. Forms a bridge to the 50S subunit in the 70S ribosome, contacting the 23S rRNA.

Its function is as follows. One of the primary rRNA binding proteins, it binds directly to 16S rRNA where it helps nucleate assembly of the platform of the 30S subunit by binding and bridging several RNA helices of the 16S rRNA. In terms of biological role, forms an intersubunit bridge (bridge B4) with the 23S rRNA of the 50S subunit in the ribosome. This is Small ribosomal subunit protein uS15 from Synechococcus sp. (strain CC9605).